The primary structure comprises 433 residues: Ascus wall endo-1,3-alpha-glucanase (433 aa).

The protein belongs to the glycosyl hydrolase 71 family.

Its subcellular location is the ascus epiplasm. It catalyses the reaction Endohydrolysis of (1-&gt;3)-alpha-D-glucosidic linkages in isolichenin, pseudonigeran and nigeran.. Promotes the release of ascospores from asci by hydrolyzing 1,3-alpha-glucan in the ascus wall. The polypeptide is Ascus wall endo-1,3-alpha-glucanase (Schizosaccharomyces pombe (strain 972 / ATCC 24843) (Fission yeast)).